A 169-amino-acid polypeptide reads, in one-letter code: UPF0251 protein MM_2090 (169 aa).

This sequence belongs to the UPF0251 family.

The protein is UPF0251 protein MM_2090 of Methanosarcina mazei (strain ATCC BAA-159 / DSM 3647 / Goe1 / Go1 / JCM 11833 / OCM 88) (Methanosarcina frisia).